Consider the following 131-residue polypeptide: Small ribosomal subunit protein uS8 (131 aa).

This sequence belongs to the universal ribosomal protein uS8 family. Part of the 30S ribosomal subunit. Contacts proteins S5 and S12.

Its function is as follows. One of the primary rRNA binding proteins, it binds directly to 16S rRNA central domain where it helps coordinate assembly of the platform of the 30S subunit. This is Small ribosomal subunit protein uS8 from Solibacter usitatus (strain Ellin6076).